The primary structure comprises 1084 residues: Teashirt homolog 1 (1084 aa).

Disordered regions lie at residues Glu49–Tyr108, Asn140–Thr167, and Gly269–Glu298. 2 stretches are compositionally biased toward polar residues: residues Gln57–Asp71 and Asn140–Glu152. C2H2-type zinc fingers lie at residues Phe246–His270 and Leu307–His331. Over residues Gly269–Lys284 the composition is skewed to basic and acidic residues. The C2H2-type 3; atypical zinc finger occupies Leu416–His440. 2 disordered regions span residues Ser467–Glu534 and Thr653–Lys728. Composition is skewed to basic and acidic residues over residues Ser496 to Glu534, Thr653 to Ser671, and Lys681 to Leu714. Position 771 is a phosphoserine (Ser771). A disordered region spans residues Gly855 to Glu879. The span at Pro859–Ser868 shows a compositional bias: polar residues. Residues Arg891–Gly961 constitute a DNA-binding region (homeobox; atypical). C2H2-type zinc fingers lie at residues Phe976–His998 and Phe1044–His1067.

This sequence belongs to the teashirt C2H2-type zinc-finger protein family. As to quaternary structure, interacts (via homeobox domain) with APBB1 (via PID domain 1).

It localises to the nucleus. In terms of biological role, probable transcriptional regulator involved in developmental processes. May act as a transcriptional repressor (Potential). This Mus musculus (Mouse) protein is Teashirt homolog 1 (Tshz1).